A 509-amino-acid chain; its full sequence is ATP synthase subunit alpha (509 aa).

169–176 (GDRQTGKT) contributes to the ATP binding site.

It belongs to the ATPase alpha/beta chains family. As to quaternary structure, F-type ATPases have 2 components, CF(1) - the catalytic core - and CF(0) - the membrane proton channel. CF(1) has five subunits: alpha(3), beta(3), gamma(1), delta(1), epsilon(1). CF(0) has three main subunits: a(1), b(2) and c(9-12). The alpha and beta chains form an alternating ring which encloses part of the gamma chain. CF(1) is attached to CF(0) by a central stalk formed by the gamma and epsilon chains, while a peripheral stalk is formed by the delta and b chains.

It localises to the cell inner membrane. The enzyme catalyses ATP + H2O + 4 H(+)(in) = ADP + phosphate + 5 H(+)(out). Its function is as follows. Produces ATP from ADP in the presence of a proton gradient across the membrane. The alpha chain is a regulatory subunit. The sequence is that of ATP synthase subunit alpha from Brucella canis (strain ATCC 23365 / NCTC 10854 / RM-666).